The following is a 300-amino-acid chain: ATP-dependent (S)-NAD(P)H-hydrate dehydratase (300 aa).

A YjeF C-terminal domain is found at 6 to 297; sequence YAGKIKEFIP…GCIHQSFTSL (292 aa). (6S)-NADPHX contacts are provided by residues Gly-106 and 158–164; that span reads NEVEFKR. ATP is bound by residues 188 to 192 and 218 to 227; these read KGSTD and GSNRRCGGQG. Asp-228 contributes to the (6S)-NADPHX binding site.

The protein belongs to the NnrD/CARKD family. Mg(2+) is required as a cofactor.

It catalyses the reaction (6S)-NADHX + ATP = ADP + phosphate + NADH + H(+). It carries out the reaction (6S)-NADPHX + ATP = ADP + phosphate + NADPH + H(+). Its function is as follows. Catalyzes the dehydration of the S-form of NAD(P)HX at the expense of ATP, which is converted to ADP. Together with NAD(P)HX epimerase, which catalyzes the epimerization of the S- and R-forms, the enzyme allows the repair of both epimers of NAD(P)HX, a damaged form of NAD(P)H that is a result of enzymatic or heat-dependent hydration. The chain is ATP-dependent (S)-NAD(P)H-hydrate dehydratase from Pediculus humanus subsp. corporis (Body louse).